The sequence spans 84 residues: Anthracycline acyl carrier protein DauA (84 aa).

A Carrier domain is found at 3–80 (ELSLAELREI…SMLIFVNERL (78 aa)). S40 bears the O-(pantetheine 4'-phosphoryl)serine mark.

It functions in the pathway antibiotic biosynthesis; daunorubicin biosynthesis. It participates in antibiotic biosynthesis; carminomycin biosynthesis. Its pathway is antibiotic biosynthesis; rhodomycin biosynthesis. The protein operates within antibiotic biosynthesis; aclacinomycin biosynthesis. Involved in the biosynthesis of aklanonate which is an important precursor common to the formation of the clinically significant anthracyclines such as carminomycin, daunorubicin (daunomycin), rhodomycin, aclacinomycin T (aklavin) and aclacinomycin A (aclarubicin). These compounds are aromatic polyketide antibiotics that exhibit high cytotoxicity and are widely applied in the chemotherapy of a variety of cancers. This Streptomyces sp. (strain C5) protein is Anthracycline acyl carrier protein DauA (dauA).